A 73-amino-acid polypeptide reads, in one-letter code: Small ribosomal subunit protein eS27 (73 aa).

The Zn(2+) site is built by C28, C31, C47, and C50. The C4-type zinc finger occupies 28-50; it reads CPKCGNRQVVFSHSTFRARCLNC.

It belongs to the eukaryotic ribosomal protein eS27 family. In terms of assembly, part of the 30S ribosomal subunit. Requires Zn(2+) as cofactor.

In Aeropyrum pernix (strain ATCC 700893 / DSM 11879 / JCM 9820 / NBRC 100138 / K1), this protein is Small ribosomal subunit protein eS27.